The following is a 292-amino-acid chain: Probable 2-(5''-triphosphoribosyl)-3'-dephosphocoenzyme-A synthase (292 aa).

The protein belongs to the CitG/MdcB family.

The catalysed reaction is 3'-dephospho-CoA + ATP = 2'-(5''-triphospho-alpha-D-ribosyl)-3'-dephospho-CoA + adenine. Functionally, involved in the formation of 2-(5''-phosphoribosyl)-3'-dephosphocoenzyme-A, the prosthetic group of the acyl-carrier protein of the malonate decarboxylase. The sequence is that of Probable 2-(5''-triphosphoribosyl)-3'-dephosphocoenzyme-A synthase from Azotobacter vinelandii (strain DJ / ATCC BAA-1303).